A 287-amino-acid polypeptide reads, in one-letter code: Sulfofructosephosphate aldolase (287 aa).

Aspartate 82 (proton donor) is an active-site residue. The Zn(2+) site is built by histidine 83 and histidine 180. Glycine 181 lines the dihydroxyacetone phosphate pocket. Histidine 208 is a binding site for Zn(2+). Residues 209 to 211 (GGS) and 230 to 233 (NVDT) contribute to the dihydroxyacetone phosphate site.

Belongs to the class II fructose-bisphosphate aldolase family. It depends on Zn(2+) as a cofactor.

The enzyme catalyses 6-deoxy-6-sulfo-D-fructose 1-phosphate = (2S)-3-sulfolactaldehyde + dihydroxyacetone phosphate. In terms of biological role, part of the sulfo-EMP2 pathway, a D-sulfoquinovose degradation pathway that produces sulfolactate (SL). Cleaves 6-deoxy-6-sulfo-D-fructose 1-phosphate (SFP) to form dihydroxyacetone phosphate (DHAP) and 3-sulfolactaldehyde (SLA). The protein is Sulfofructosephosphate aldolase of Alkalicoccus urumqiensis (Bacillus urumqiensis).